Consider the following 151-residue polypeptide: Transcriptional repressor NrdR (151 aa).

A zinc finger spans residues 3-34 (CPYCAYGESKVVDSRSTEDGSSIRRRRECLKC). In terms of domain architecture, ATP-cone spans 49–139 (ILVIKKNMSR…VYRQFKDINT (91 aa)).

The protein belongs to the NrdR family. The cofactor is Zn(2+).

Its function is as follows. Negatively regulates transcription of bacterial ribonucleotide reductase nrd genes and operons by binding to NrdR-boxes. The chain is Transcriptional repressor NrdR from Clostridium botulinum (strain 657 / Type Ba4).